The following is a 542-amino-acid chain: Phosphoenolpyruvate carboxykinase (ATP) (542 aa).

The substrate site is built by arginine 67, tyrosine 208, and lysine 214. ATP-binding positions include lysine 214, histidine 233, and 249 to 257 (GLSGTGKTT). Mn(2+) contacts are provided by lysine 214 and histidine 233. Aspartate 270 lines the Mn(2+) pocket. ATP-binding positions include glutamate 298, arginine 334, 450-451 (RI), and threonine 456. Arginine 334 is a binding site for substrate.

Belongs to the phosphoenolpyruvate carboxykinase (ATP) family. In terms of assembly, monomer. Mn(2+) is required as a cofactor.

The protein resides in the cytoplasm. The catalysed reaction is oxaloacetate + ATP = phosphoenolpyruvate + ADP + CO2. It participates in carbohydrate biosynthesis; gluconeogenesis. Involved in the gluconeogenesis. Catalyzes the conversion of oxaloacetate (OAA) to phosphoenolpyruvate (PEP) through direct phosphoryl transfer between the nucleoside triphosphate and OAA. This Vibrio cholerae serotype O1 (strain ATCC 39541 / Classical Ogawa 395 / O395) protein is Phosphoenolpyruvate carboxykinase (ATP).